An 833-amino-acid chain; its full sequence is Leucine--tRNA ligase (833 aa).

The short motif at 41–52 is the 'HIGH' region element; sequence PYPSGAGLHVGH. The short motif at 610–614 is the 'KMSKS' region element; that stretch reads KMSKS. An ATP-binding site is contributed by K613.

It belongs to the class-I aminoacyl-tRNA synthetase family.

Its subcellular location is the cytoplasm. The enzyme catalyses tRNA(Leu) + L-leucine + ATP = L-leucyl-tRNA(Leu) + AMP + diphosphate. This Streptococcus pyogenes serotype M2 (strain MGAS10270) protein is Leucine--tRNA ligase.